Reading from the N-terminus, the 633-residue chain is DNA mismatch repair protein MutL (633 aa).

The protein belongs to the DNA mismatch repair MutL/HexB family.

Functionally, this protein is involved in the repair of mismatches in DNA. It is required for dam-dependent methyl-directed DNA mismatch repair. May act as a 'molecular matchmaker', a protein that promotes the formation of a stable complex between two or more DNA-binding proteins in an ATP-dependent manner without itself being part of a final effector complex. This chain is DNA mismatch repair protein MutL, found in Macrococcus caseolyticus (strain JCSC5402) (Macrococcoides caseolyticum).